A 312-amino-acid polypeptide reads, in one-letter code: Methionyl-tRNA formyltransferase (312 aa).

A (6S)-5,6,7,8-tetrahydrofolate-binding site is contributed by 109–112; the sequence is SLLP.

The protein belongs to the Fmt family.

It carries out the reaction L-methionyl-tRNA(fMet) + (6R)-10-formyltetrahydrofolate = N-formyl-L-methionyl-tRNA(fMet) + (6S)-5,6,7,8-tetrahydrofolate + H(+). Functionally, attaches a formyl group to the free amino group of methionyl-tRNA(fMet). The formyl group appears to play a dual role in the initiator identity of N-formylmethionyl-tRNA by promoting its recognition by IF2 and preventing the misappropriation of this tRNA by the elongation apparatus. The protein is Methionyl-tRNA formyltransferase of Anaeromyxobacter dehalogenans (strain 2CP-1 / ATCC BAA-258).